The sequence spans 219 residues: Small ribosomal subunit protein uS5 (219 aa).

Residues 1 to 32 form a disordered region; it reads MSHPQSRPGGRDGRPRRRREPREEAPWVPKTA. An S5 DRBM domain is found at 68–131; that stretch reads LKTEVVDVGI…NQALLNVGPI (64 aa).

This sequence belongs to the universal ribosomal protein uS5 family. In terms of assembly, part of the 30S ribosomal subunit. Contacts protein S4.

In terms of biological role, with S4 and S12 plays an important role in translational accuracy. The sequence is that of Small ribosomal subunit protein uS5 (rps5) from Cenarchaeum symbiosum (strain A).